We begin with the raw amino-acid sequence, 239 residues long: tRNA (guanine-N(1)-)-methyltransferase (239 aa).

Residues glycine 108 and 127-132 (IGDYVL) each bind S-adenosyl-L-methionine.

It belongs to the RNA methyltransferase TrmD family. In terms of assembly, homodimer.

It localises to the cytoplasm. It catalyses the reaction guanosine(37) in tRNA + S-adenosyl-L-methionine = N(1)-methylguanosine(37) in tRNA + S-adenosyl-L-homocysteine + H(+). Specifically methylates guanosine-37 in various tRNAs. The polypeptide is tRNA (guanine-N(1)-)-methyltransferase (Lactobacillus helveticus (strain DPC 4571)).